Consider the following 365-residue polypeptide: Holliday junction branch migration complex subunit RuvB (365 aa).

The interval 1-191 (MSPELGGGYD…FGFTAHMDFY (191 aa)) is large ATPase domain (RuvB-L). ATP-binding positions include leucine 30, arginine 31, glycine 72, lysine 75, threonine 76, serine 77, 138 to 140 (EDF), arginine 181, tyrosine 191, and arginine 228. Threonine 76 is a binding site for Mg(2+). The tract at residues 192–262 (EPAELKQILM…IAHAALAVYD (71 aa)) is small ATPAse domain (RuvB-S). The tract at residues 265–365 (QLGLDRLDRS…QASLFDPEDP (101 aa)) is head domain (RuvB-H). DNA is bound by residues arginine 320 and arginine 325.

It belongs to the RuvB family. Homohexamer. Forms an RuvA(8)-RuvB(12)-Holliday junction (HJ) complex. HJ DNA is sandwiched between 2 RuvA tetramers; dsDNA enters through RuvA and exits via RuvB. An RuvB hexamer assembles on each DNA strand where it exits the tetramer. Each RuvB hexamer is contacted by two RuvA subunits (via domain III) on 2 adjacent RuvB subunits; this complex drives branch migration. In the full resolvosome a probable DNA-RuvA(4)-RuvB(12)-RuvC(2) complex forms which resolves the HJ.

The protein localises to the cytoplasm. The enzyme catalyses ATP + H2O = ADP + phosphate + H(+). Its function is as follows. The RuvA-RuvB-RuvC complex processes Holliday junction (HJ) DNA during genetic recombination and DNA repair, while the RuvA-RuvB complex plays an important role in the rescue of blocked DNA replication forks via replication fork reversal (RFR). RuvA specifically binds to HJ cruciform DNA, conferring on it an open structure. The RuvB hexamer acts as an ATP-dependent pump, pulling dsDNA into and through the RuvAB complex. RuvB forms 2 homohexamers on either side of HJ DNA bound by 1 or 2 RuvA tetramers; 4 subunits per hexamer contact DNA at a time. Coordinated motions by a converter formed by DNA-disengaged RuvB subunits stimulates ATP hydrolysis and nucleotide exchange. Immobilization of the converter enables RuvB to convert the ATP-contained energy into a lever motion, pulling 2 nucleotides of DNA out of the RuvA tetramer per ATP hydrolyzed, thus driving DNA branch migration. The RuvB motors rotate together with the DNA substrate, which together with the progressing nucleotide cycle form the mechanistic basis for DNA recombination by continuous HJ branch migration. Branch migration allows RuvC to scan DNA until it finds its consensus sequence, where it cleaves and resolves cruciform DNA. This chain is Holliday junction branch migration complex subunit RuvB, found in Rhodococcus opacus (strain B4).